The chain runs to 348 residues: MRLGLLSVALLFVGSSHLYSDHYSPSGRHRLGPSPEPAASSQQAEAVRKRLRRRREGGAHAEDCGTAPLKDVLQGSRIIGGTEAQAGAWPWVVSLQIKYGRVLVHVCGGTLVRERWVLTAAHCTKDASDPLMWTAVIGTNNIHGRYPHTKKIKIKAIIIHPNFILESYVNDIALFHLKKAVRYNDYIQPICLPFDVFQILDGNTKCFISGWGRTKEEGNATNILQDAEVHYISREMCNSERSYGGIIPNTSFCAGDEDGAFDTCRGDSGGPLMCYLPEYKRFFVMGITSYGHGCGRRGFPGVYIGPSFYQKWLTEHFFHASTQGILTINILRGQILIALCFVILLATT.

The N-terminal stretch at 1–20 is a signal peptide; that stretch reads MRLGLLSVALLFVGSSHLYS. The Extracellular portion of the chain corresponds to 21–324; it reads DHYSPSGRHR…EHFFHASTQG (304 aa). The tract at residues 24–46 is disordered; the sequence is SPSGRHRLGPSPEPAASSQQAEA. The region spanning 78 to 318 is the Peptidase S1 domain; sequence IIGGTEAQAG…YQKWLTEHFF (241 aa). Cysteines 107 and 123 form a disulfide. Active-site charge relay system residues include His-122 and Asp-171. Cystine bridges form between Cys-206-Cys-274, Cys-237-Cys-253, and Cys-264-Cys-294. N-linked (GlcNAc...) asparagine glycans are attached at residues Asn-219 and Asn-249. Ser-268 serves as the catalytic Charge relay system. The chain crosses the membrane as a helical span at residues 325-345; it reads ILTINILRGQILIALCFVILL. Residues 346-348 are Cytoplasmic-facing; it reads ATT.

It belongs to the peptidase S1 family. In testis, expressed in spermatocytes and spermatids (at protein level).

Its subcellular location is the cell membrane. It is found in the cytoplasmic vesicle. It localises to the secretory vesicle. The protein localises to the acrosome. Its function is as follows. Required for male fertility. Plays a critical role in sperm capacitation and acrosome reactions during fertilization, and also plays a role in the regulation of proteins involved in spermatogenesis. Regulates protein pathways that promote chromosomal synapsis formation, double-strand break repair, formation of the inner mitochondrial membrane cristae and apoptosis in developing sperm. Required for normal sperm motility and binding to the zona pellucida, potentially via a role in ADAM3 protein maturation. This is Transmembrane protease serine 12 from Homo sapiens (Human).